We begin with the raw amino-acid sequence, 142 residues long: Regulator of ribonuclease activity B (142 aa).

Positions 117–142 are disordered; that stretch reads PNADEDEYGEDGEFFDDEFADDDEKR.

Belongs to the RraB family. In terms of assembly, interacts with the C-terminal region of Rne.

The protein resides in the cytoplasm. Functionally, globally modulates RNA abundance by binding to RNase E (Rne) and regulating its endonucleolytic activity. Can modulate Rne action in a substrate-dependent manner by altering the composition of the degradosome. In Actinobacillus succinogenes (strain ATCC 55618 / DSM 22257 / CCUG 43843 / 130Z), this protein is Regulator of ribonuclease activity B.